A 356-amino-acid polypeptide reads, in one-letter code: Glucose-1-phosphate thymidylyltransferase (356 aa).

2 residues coordinate Mg(2+): aspartate 107 and aspartate 221.

This sequence belongs to the glucose-1-phosphate thymidylyltransferase family. It depends on Mg(2+) as a cofactor.

It catalyses the reaction dTTP + alpha-D-glucose 1-phosphate + H(+) = dTDP-alpha-D-glucose + diphosphate. It participates in antibiotic biosynthesis. Its function is as follows. Involved in the biosynthesis of the two 2,6-deoxysugars, dTDP-L-oleandrose and dTDP-D-desosamine, attached to the macrolactone ring oleandolide to produce the aglycone antibiotic oleandomycin. Catalyzes the formation of dTDP-glucose from deoxythymidine triphosphate (dTTP) and glucose 1-phosphate. The chain is Glucose-1-phosphate thymidylyltransferase from Streptomyces antibioticus.